Consider the following 203-residue polypeptide: Urease accessory protein UreG (203 aa).

10-17 (GPVGAGKT) provides a ligand contact to GTP.

Belongs to the SIMIBI class G3E GTPase family. UreG subfamily. As to quaternary structure, homodimer. UreD, UreF and UreG form a complex that acts as a GTP-hydrolysis-dependent molecular chaperone, activating the urease apoprotein by helping to assemble the nickel containing metallocenter of UreC. The UreE protein probably delivers the nickel.

It is found in the cytoplasm. Functionally, facilitates the functional incorporation of the urease nickel metallocenter. This process requires GTP hydrolysis, probably effectuated by UreG. This Kocuria rhizophila (strain ATCC 9341 / DSM 348 / NBRC 103217 / DC2201) protein is Urease accessory protein UreG.